A 433-amino-acid polypeptide reads, in one-letter code: Enolase (433 aa).

Glutamine 167 contacts (2R)-2-phosphoglycerate. Residue glutamate 209 is the Proton donor of the active site. Aspartate 246, glutamate 291, and aspartate 318 together coordinate Mg(2+). 4 residues coordinate (2R)-2-phosphoglycerate: lysine 343, arginine 372, serine 373, and lysine 394. Lysine 343 functions as the Proton acceptor in the catalytic mechanism.

It belongs to the enolase family. Component of the RNA degradosome, a multiprotein complex involved in RNA processing and mRNA degradation. It depends on Mg(2+) as a cofactor.

It localises to the cytoplasm. Its subcellular location is the secreted. The protein resides in the cell surface. It carries out the reaction (2R)-2-phosphoglycerate = phosphoenolpyruvate + H2O. It functions in the pathway carbohydrate degradation; glycolysis; pyruvate from D-glyceraldehyde 3-phosphate: step 4/5. Its function is as follows. Catalyzes the reversible conversion of 2-phosphoglycerate (2-PG) into phosphoenolpyruvate (PEP). It is essential for the degradation of carbohydrates via glycolysis. This chain is Enolase, found in Edwardsiella ictaluri (strain 93-146).